Reading from the N-terminus, the 78-residue chain is Large ribosomal subunit protein bL28B (78 aa).

The interval 1-29 (MSAHCQVTGRKPGFGNTVSHSHRRSRRRW) is disordered. The span at 20 to 29 (HSHRRSRRRW) shows a compositional bias: basic residues.

This sequence belongs to the bacterial ribosomal protein bL28 family.

This chain is Large ribosomal subunit protein bL28B (rpmB2), found in Mycobacterium bovis (strain ATCC BAA-935 / AF2122/97).